The primary structure comprises 75 residues: Mitotic-spindle organizing protein 1 (75 aa).

It belongs to the MOZART1 family. In terms of assembly, part of the gamma-tubulin complex.

It localises to the cytoplasm. The protein localises to the cytoskeleton. It is found in the microtubule organizing center. Its subcellular location is the centrosome. The protein resides in the spindle. Its function is as follows. Required for gamma-tubulin complex recruitment to the centrosome. This Danio rerio (Zebrafish) protein is Mitotic-spindle organizing protein 1 (mzt1).